A 144-amino-acid polypeptide reads, in one-letter code: 3-hydroxyacyl-[acyl-carrier-protein] dehydratase FabZ (144 aa).

H48 is a catalytic residue.

It belongs to the thioester dehydratase family. FabZ subfamily.

The protein resides in the cytoplasm. It carries out the reaction a (3R)-hydroxyacyl-[ACP] = a (2E)-enoyl-[ACP] + H2O. Functionally, involved in unsaturated fatty acids biosynthesis. Catalyzes the dehydration of short chain beta-hydroxyacyl-ACPs and long chain saturated and unsaturated beta-hydroxyacyl-ACPs. In Bacillus pumilus (strain SAFR-032), this protein is 3-hydroxyacyl-[acyl-carrier-protein] dehydratase FabZ.